A 228-amino-acid chain; its full sequence is Cytochrome c oxidase subunit 2 (228 aa).

The Mitochondrial intermembrane portion of the chain corresponds to 1–14 (MAYPFQLGFQDATS). Residues 15–45 (PIMEELLHFHDHTLMIVFLISSLVLYIISLM) form a helical membrane-spanning segment. The Mitochondrial matrix portion of the chain corresponds to 46 to 59 (LTTKLTHTSTMDAQ). The chain crosses the membrane as a helical span at residues 60-87 (EVETIWTILPAIILILIALPSLRILYMM). Topologically, residues 88–228 (DEINNPALTV…FEKWSTSMLT (141 aa)) are mitochondrial intermembrane. Cu cation is bound by residues His161, Cys196, Glu198, Cys200, His204, and Met207. Glu198 serves as a coordination point for Mg(2+). Residue Tyr218 is modified to Phosphotyrosine.

The protein belongs to the cytochrome c oxidase subunit 2 family. As to quaternary structure, component of the cytochrome c oxidase (complex IV, CIV), a multisubunit enzyme composed of 14 subunits. The complex is composed of a catalytic core of 3 subunits MT-CO1, MT-CO2 and MT-CO3, encoded in the mitochondrial DNA, and 11 supernumerary subunits COX4I, COX5A, COX5B, COX6A, COX6B, COX6C, COX7A, COX7B, COX7C, COX8 and NDUFA4, which are encoded in the nuclear genome. The complex exists as a monomer or a dimer and forms supercomplexes (SCs) in the inner mitochondrial membrane with NADH-ubiquinone oxidoreductase (complex I, CI) and ubiquinol-cytochrome c oxidoreductase (cytochrome b-c1 complex, complex III, CIII), resulting in different assemblies (supercomplex SCI(1)III(2)IV(1) and megacomplex MCI(2)III(2)IV(2)). Found in a complex with TMEM177, COA6, COX18, COX20, SCO1 and SCO2. Interacts with TMEM177 in a COX20-dependent manner. Interacts with COX20. Interacts with COX16. Cu cation serves as cofactor.

The protein localises to the mitochondrion inner membrane. The catalysed reaction is 4 Fe(II)-[cytochrome c] + O2 + 8 H(+)(in) = 4 Fe(III)-[cytochrome c] + 2 H2O + 4 H(+)(out). Functionally, component of the cytochrome c oxidase, the last enzyme in the mitochondrial electron transport chain which drives oxidative phosphorylation. The respiratory chain contains 3 multisubunit complexes succinate dehydrogenase (complex II, CII), ubiquinol-cytochrome c oxidoreductase (cytochrome b-c1 complex, complex III, CIII) and cytochrome c oxidase (complex IV, CIV), that cooperate to transfer electrons derived from NADH and succinate to molecular oxygen, creating an electrochemical gradient over the inner membrane that drives transmembrane transport and the ATP synthase. Cytochrome c oxidase is the component of the respiratory chain that catalyzes the reduction of oxygen to water. Electrons originating from reduced cytochrome c in the intermembrane space (IMS) are transferred via the dinuclear copper A center (CU(A)) of subunit 2 and heme A of subunit 1 to the active site in subunit 1, a binuclear center (BNC) formed by heme A3 and copper B (CU(B)). The BNC reduces molecular oxygen to 2 water molecules using 4 electrons from cytochrome c in the IMS and 4 protons from the mitochondrial matrix. This chain is Cytochrome c oxidase subunit 2 (MT-CO2), found in Sus scrofa (Pig).